Consider the following 385-residue polypeptide: Probable tRNA sulfurtransferase (385 aa).

One can recognise a THUMP domain in the interval 65-165 (AILQELFSFL…KEHFLVFTER (101 aa)). Residues 183-184 (LL), 208-209 (TF), arginine 267, glycine 285, and glutamine 294 each bind ATP.

It belongs to the ThiI family.

The protein localises to the cytoplasm. The catalysed reaction is [ThiI sulfur-carrier protein]-S-sulfanyl-L-cysteine + a uridine in tRNA + 2 reduced [2Fe-2S]-[ferredoxin] + ATP + H(+) = [ThiI sulfur-carrier protein]-L-cysteine + a 4-thiouridine in tRNA + 2 oxidized [2Fe-2S]-[ferredoxin] + AMP + diphosphate. It catalyses the reaction [ThiS sulfur-carrier protein]-C-terminal Gly-Gly-AMP + S-sulfanyl-L-cysteinyl-[cysteine desulfurase] + AH2 = [ThiS sulfur-carrier protein]-C-terminal-Gly-aminoethanethioate + L-cysteinyl-[cysteine desulfurase] + A + AMP + 2 H(+). It functions in the pathway cofactor biosynthesis; thiamine diphosphate biosynthesis. Its function is as follows. Catalyzes the ATP-dependent transfer of a sulfur to tRNA to produce 4-thiouridine in position 8 of tRNAs, which functions as a near-UV photosensor. Also catalyzes the transfer of sulfur to the sulfur carrier protein ThiS, forming ThiS-thiocarboxylate. This is a step in the synthesis of thiazole, in the thiamine biosynthesis pathway. The sulfur is donated as persulfide by IscS. The chain is Probable tRNA sulfurtransferase from Mycoplasma genitalium (strain ATCC 33530 / DSM 19775 / NCTC 10195 / G37) (Mycoplasmoides genitalium).